We begin with the raw amino-acid sequence, 124 residues long: MLKIGKLLTSSFFSYFLIGIVNTALHWGVFYACYNNLAFGQGRSNIVGFICAATFSFFANARCSFKVSATKARYFIFIFFMGAMSYLFGVLFDLLALSPIFTLFTFSLFSLVLGYCASKYFIFR.

The next 4 membrane-spanning stretches (helical) occupy residues 12-32 (FFSYFLIGIVNTALHWGVFYA), 45-65 (NIVGFICAATFSFFANARCSF), 75-95 (FIFIFFMGAMSYLFGVLFDLL), and 96-116 (ALSPIFTLFTFSLFSLVLGYC).

Belongs to the GtrA family.

Its subcellular location is the cell membrane. Its pathway is bacterial outer membrane biogenesis; lipopolysaccharide biosynthesis. Involved in O antigen modification. Involved in the translocation of bactoprenol-linked glucose across the cytoplasmic membrane. In Shigella flexneri, this protein is Bactoprenol-linked glucose translocase (rfbI).